A 393-amino-acid chain; its full sequence is Pigment production hydroxylase (393 aa).

Its function is as follows. Involved in pigment production acting as a hydroxylase that transforms indole to indoxyl, resulting in the formation of indigo. The protein is Pigment production hydroxylase of Rhodococcus erythropolis (Arthrobacter picolinophilus).